The sequence spans 264 residues: Thiazole synthase (264 aa).

The active-site Schiff-base intermediate with DXP is Lys106. 1-deoxy-D-xylulose 5-phosphate-binding positions include Gly167, 193-194, and 215-216; these read AG and NT.

It belongs to the ThiG family. Homotetramer. Forms heterodimers with either ThiH or ThiS.

Its subcellular location is the cytoplasm. It catalyses the reaction [ThiS sulfur-carrier protein]-C-terminal-Gly-aminoethanethioate + 2-iminoacetate + 1-deoxy-D-xylulose 5-phosphate = [ThiS sulfur-carrier protein]-C-terminal Gly-Gly + 2-[(2R,5Z)-2-carboxy-4-methylthiazol-5(2H)-ylidene]ethyl phosphate + 2 H2O + H(+). It functions in the pathway cofactor biosynthesis; thiamine diphosphate biosynthesis. In terms of biological role, catalyzes the rearrangement of 1-deoxy-D-xylulose 5-phosphate (DXP) to produce the thiazole phosphate moiety of thiamine. Sulfur is provided by the thiocarboxylate moiety of the carrier protein ThiS. In vitro, sulfur can be provided by H(2)S. The chain is Thiazole synthase from Stenotrophomonas maltophilia (strain K279a).